The sequence spans 287 residues: Protoheme IX farnesyltransferase (287 aa).

8 helical membrane passes run 9-29 (IVTM…SATL), 31-51 (LIDW…AGAA), 94-114 (IILW…TWLI), 132-152 (VGAI…GGTL), 158-178 (WMLF…IAWL), 202-222 (AWQS…LAWF), 228-248 (VASA…WPLL), and 267-287 (LRWS…RASL).

Belongs to the UbiA prenyltransferase family. Protoheme IX farnesyltransferase subfamily.

Its subcellular location is the cell inner membrane. The catalysed reaction is heme b + (2E,6E)-farnesyl diphosphate + H2O = Fe(II)-heme o + diphosphate. Its pathway is porphyrin-containing compound metabolism; heme O biosynthesis; heme O from protoheme: step 1/1. Functionally, converts heme B (protoheme IX) to heme O by substitution of the vinyl group on carbon 2 of heme B porphyrin ring with a hydroxyethyl farnesyl side group. The chain is Protoheme IX farnesyltransferase from Rhodopirellula baltica (strain DSM 10527 / NCIMB 13988 / SH1).